The primary structure comprises 281 residues: Probable endonuclease 4 (281 aa).

Residues His69, His109, Glu145, Asp179, His182, His216, Asp229, His231, and Glu261 each contribute to the Zn(2+) site.

The protein belongs to the AP endonuclease 2 family. The cofactor is Zn(2+).

It carries out the reaction Endonucleolytic cleavage to 5'-phosphooligonucleotide end-products.. Its function is as follows. Endonuclease IV plays a role in DNA repair. It cleaves phosphodiester bonds at apurinic or apyrimidinic (AP) sites, generating a 3'-hydroxyl group and a 5'-terminal sugar phosphate. This Chlorobaculum parvum (strain DSM 263 / NCIMB 8327) (Chlorobium vibrioforme subsp. thiosulfatophilum) protein is Probable endonuclease 4.